The primary structure comprises 166 residues: Ureidoglycolate lyase (166 aa).

Belongs to the ureidoglycolate lyase family. As to quaternary structure, homodimer. It depends on Ni(2+) as a cofactor.

It carries out the reaction (S)-ureidoglycolate = urea + glyoxylate. It functions in the pathway nitrogen metabolism; (S)-allantoin degradation. Catalyzes the catabolism of the allantoin degradation intermediate (S)-ureidoglycolate, generating urea and glyoxylate. Involved in the utilization of allantoin as nitrogen source. The polypeptide is Ureidoglycolate lyase (Agrobacterium fabrum (strain C58 / ATCC 33970) (Agrobacterium tumefaciens (strain C58))).